The sequence spans 250 residues: NAD-dependent protein deacetylase 2 (250 aa).

The 247-residue stretch at 4–250 (MDSKNLFKKA…LRNIWNLIKS (247 aa)) folds into the Deacetylase sirtuin-type domain. Positions 29, 33, 40, 41, 107, 109, 110, and 125 each coordinate NAD(+). F40 contacts nicotinamide. I109 and D110 together coordinate nicotinamide. The Proton acceptor role is filled by H125. Residues C133, C136, C158, and C161 each coordinate Zn(2+). NAD(+) is bound by residues S198, S199, and N219.

This sequence belongs to the sirtuin family. Class U subfamily. Zn(2+) serves as cofactor.

It localises to the cytoplasm. The enzyme catalyses N(6)-acetyl-L-lysyl-[protein] + NAD(+) + H2O = 2''-O-acetyl-ADP-D-ribose + nicotinamide + L-lysyl-[protein]. Functionally, NAD-dependent protein deacetylase which modulates the activities of several enzymes which are inactive in their acetylated form. This is NAD-dependent protein deacetylase 2 from Caldanaerobacter subterraneus subsp. tengcongensis (strain DSM 15242 / JCM 11007 / NBRC 100824 / MB4) (Thermoanaerobacter tengcongensis).